The following is a 341-amino-acid chain: MKALSKLKPEEGIWMVDAPKPEMGHNDLLIKIRKTAICGTDIHIYNWDEWSQKTIPVPMVVGHEYVGEVIDMGIEVRGFDVGDRVSGEGHITCGHCRNCRGGRTHLCRNTSGVGVNRDGAFAEYLVIPAFNAFKIPDDISDDLASIFDPFGNAVHTALSFDLVGEDVLITGAGPIGIMAAAVCRHVGARHVVITDVNEYRLELANKMGATRAVNVAKESLEGVMEELGMTEGFDVGLEMSGVPSAFHSMLDTMNHGGKIAMLGIPGGEMAIDWSKVIFKGLILKGIYGREMFETWYKMASLIQSGLDISPIITHHFKIDDFQQGFDAMRSGQSGKVILNWD.

Cys38 contacts Zn(2+). Residues Thr40 and His43 each act as charge relay system in the active site. Residues His63, Glu64, Cys93, Cys96, Cys99, and Cys107 each contribute to the Zn(2+) site. NAD(+) is bound by residues Ile175, Asp195, Arg200, 262–264 (LGI), and 286–287 (IY).

Belongs to the zinc-containing alcohol dehydrogenase family. Homotetramer. Requires Zn(2+) as cofactor.

Its subcellular location is the cytoplasm. It catalyses the reaction L-threonine + NAD(+) = (2S)-2-amino-3-oxobutanoate + NADH + H(+). The protein operates within amino-acid degradation; L-threonine degradation via oxydo-reductase pathway; glycine from L-threonine: step 1/2. Its function is as follows. Catalyzes the NAD(+)-dependent oxidation of L-threonine to 2-amino-3-ketobutyrate. This chain is L-threonine 3-dehydrogenase, found in Shewanella sediminis (strain HAW-EB3).